Here is a 176-residue protein sequence, read N- to C-terminus: uncharacterized protein (176 aa).

The span at 87–100 (ASASSQLRASRVQS) shows a compositional bias: low complexity. Positions 87 to 109 (ASASSQLRASRVQSGTRQSARAG) are disordered.

This is an uncharacterized protein from Homo sapiens (Human).